A 454-amino-acid polypeptide reads, in one-letter code: MINILEVNETNKMIEQEKLDVRTITLGISLLDCCDSDLDAFNRNIYDKITRLGKDLVSTGREIELEYGIPIVNKRISVTPIALVAGRACRSEEDFVEVAKTLDKAARDTGVNFLGGYSAIVSKGTTPTDEALIRSIPAALAATGRVCSSVNIGSTKTGINMDAVKLMGEIVRETAEATKENNSLGCAKLVVFCNAPDDNPFMAGAFHGVSEADAVINVGVSGPGVIKHALEDVRGKNFEVLCETVKRTAFKVTRAGQLVAQEASERLGIPFGIVDLSLAPTPSVGDSVAGILEEMGLESVGAPGTTAALALLNDQVKKGGIMASSFVGGLSGAFIPVSEDQGMIDAVNRGALTIEKLEAMTCVCSVGLDMIAIPGDTPASTISGIIADEAAIGMINNKTTAVRLIPVIGKDLGDTVEFGGLLGHAPVQRVNGFGCADFINRGGRIPAPIHSFKN.

The protein belongs to the UPF0210 family.

The protein is UPF0210 protein Memar_2269 of Methanoculleus marisnigri (strain ATCC 35101 / DSM 1498 / JR1).